Reading from the N-terminus, the 473-residue chain is Chromosomal replication initiator protein DnaA (473 aa).

The tract at residues 1–73 (MTNIEQDRWS…LSCWQAEMPQ (73 aa)) is domain I, interacts with DnaA modulators. Residues 73 to 129 (QVHRVDLTVRTAMRCAAPAKDAPAHAEPRRDDGRPAPELRATAIAPVSATHEALGGS) are domain II. A domain III, AAA+ region region spans residues 130–352 (PLDPRLTFGS…GAINRLLAHS (223 aa)). ATP is bound by residues Gly177, Gly179, Lys180, and Thr181. A domain IV, binds dsDNA region spans residues 353–473 (KLNAQPVTLE…VELLKRQLQE (121 aa)).

This sequence belongs to the DnaA family. As to quaternary structure, oligomerizes as a right-handed, spiral filament on DNA at oriC.

The protein resides in the cytoplasm. Functionally, plays an essential role in the initiation and regulation of chromosomal replication. ATP-DnaA binds to the origin of replication (oriC) to initiate formation of the DNA replication initiation complex once per cell cycle. Binds the DnaA box (a 9 base pair repeat at the origin) and separates the double-stranded (ds)DNA. Forms a right-handed helical filament on oriC DNA; dsDNA binds to the exterior of the filament while single-stranded (ss)DNA is stabiized in the filament's interior. The ATP-DnaA-oriC complex binds and stabilizes one strand of the AT-rich DNA unwinding element (DUE), permitting loading of DNA polymerase. After initiation quickly degrades to an ADP-DnaA complex that is not apt for DNA replication. Binds acidic phospholipids. This is Chromosomal replication initiator protein DnaA from Rhodopseudomonas palustris (strain BisB18).